The following is a 318-amino-acid chain: MKSLNIIFAGTPDFAAQHLQAILNSQHNVIAVYTQPDKPAGRGKKLQASPVKQLAEQNNIPVYQPKSLRKEEAQSELKALNADVMVVVAYGLILPKAVLDAPRLGCLNVHGSILPRWRGAAPIQRSIWAGDVQTGVTIMQMDESLDTGDMLHKVYCDILPTETSTSLYNKLAELATSALIDVLDNLENSKFIAEKQDGSQSNYAEKLSKEEAQLDWSLPAMQLERNIRAFNPWPIAYFSTEDKDGNAQTLKVYQAEVLPHQDKPAGTILSADKNGIQIATVDGVLNLLQLQPAGKKPMSAQDLLNGRAEWFTIGKVLA.

Serine 112–proline 115 contacts (6S)-5,6,7,8-tetrahydrofolate.

Belongs to the Fmt family.

It catalyses the reaction L-methionyl-tRNA(fMet) + (6R)-10-formyltetrahydrofolate = N-formyl-L-methionyl-tRNA(fMet) + (6S)-5,6,7,8-tetrahydrofolate + H(+). Functionally, attaches a formyl group to the free amino group of methionyl-tRNA(fMet). The formyl group appears to play a dual role in the initiator identity of N-formylmethionyl-tRNA by promoting its recognition by IF2 and preventing the misappropriation of this tRNA by the elongation apparatus. The protein is Methionyl-tRNA formyltransferase of Haemophilus influenzae (strain PittGG).